Here is a 695-residue protein sequence, read N- to C-terminus: ATP-dependent DNA helicase II subunit 2 (695 aa).

Residues 229–461 form the Ku domain; it reads FSIGNRDSKD…IDFAVSNYID (233 aa).

This sequence belongs to the ku80 family. In terms of assembly, heterodimer of pku70 and pku80.

It localises to the nucleus. The protein resides in the chromosome. Its subcellular location is the telomere. It catalyses the reaction ATP + H2O = ADP + phosphate + H(+). Its function is as follows. Single-stranded DNA-dependent ATP-dependent helicase. Involved in non-homologous end joining (NHEJ) DNA double strand break repair. DNA-binding is sequence-independent but has a high affinity to nicks in double-stranded DNA and to the ends of duplex DNA. Binds to naturally occurring chromosomal ends, and therefore provides chromosomal end protection. Required also for telomere recombination to repair telomeric ends in the absence of telomerase. ku70, of the ku70/ku80 heterodimer, binds to the stem loop of tlc1, the RNA component of telomerase. Involved in telomere maintenance. Interacts with telomeric repeats and subtelomeric sequences thereby controlling telomere length and protecting against subtelomeric rearrangement. Required for mating-type switching. The sequence is that of ATP-dependent DNA helicase II subunit 2 (pku80) from Schizosaccharomyces pombe (strain 972 / ATCC 24843) (Fission yeast).